The sequence spans 363 residues: Chorismate synthase (363 aa).

Arg48 contributes to the NADP(+) binding site. FMN-binding positions include 125-127 (RSS), 238-239 (NA), Gly278, 293-297 (KPTAS), and Arg319.

Belongs to the chorismate synthase family. Homotetramer. FMNH2 is required as a cofactor.

It catalyses the reaction 5-O-(1-carboxyvinyl)-3-phosphoshikimate = chorismate + phosphate. It functions in the pathway metabolic intermediate biosynthesis; chorismate biosynthesis; chorismate from D-erythrose 4-phosphate and phosphoenolpyruvate: step 7/7. Its function is as follows. Catalyzes the anti-1,4-elimination of the C-3 phosphate and the C-6 proR hydrogen from 5-enolpyruvylshikimate-3-phosphate (EPSP) to yield chorismate, which is the branch point compound that serves as the starting substrate for the three terminal pathways of aromatic amino acid biosynthesis. This reaction introduces a second double bond into the aromatic ring system. This is Chorismate synthase from Acinetobacter baumannii (strain AB0057).